Reading from the N-terminus, the 467-residue chain is Hydroxyacid-oxoacid transhydrogenase, mitochondrial (467 aa).

Residue lysine 445 is modified to N6-acetyllysine. The residue at position 452 (serine 452) is a Phosphoserine.

Belongs to the iron-containing alcohol dehydrogenase family. Hydroxyacid-oxoacid transhydrogenase subfamily.

The protein resides in the mitochondrion. The enzyme catalyses (S)-3-hydroxybutanoate + 2-oxoglutarate = (R)-2-hydroxyglutarate + acetoacetate. It catalyses the reaction 4-hydroxybutanoate + 2-oxoglutarate = (R)-2-hydroxyglutarate + succinate semialdehyde. Functionally, catalyzes the cofactor-independent reversible oxidation of gamma-hydroxybutyrate (GHB) to succinic semialdehyde (SSA) coupled to reduction of 2-ketoglutarate (2-KG) to D-2-hydroxyglutarate (D-2-HG). L-3-hydroxybutyrate (L-3-OHB) is also a substrate for HOT when using 2-KG as hydrogen acceptor, resulting in the formation of D-2-HG. The polypeptide is Hydroxyacid-oxoacid transhydrogenase, mitochondrial (ADHFE1) (Pongo abelii (Sumatran orangutan)).